Reading from the N-terminus, the 1035-residue chain is FACT complex subunit SPT16 (1035 aa).

Residues 432–500 adopt a coiled-coil conformation; sequence FLKKEDEEEE…AKRRLTEQKG (69 aa). Disordered regions lie at residues 491 to 520 and 920 to 1035; these read AKRR…ASQV and EQGG…KRKK. Over residues 499-519 the composition is skewed to polar residues; it reads KGGQQTMKARKSNVSYKNASQ. The segment covering 929–985 has biased composition (acidic residues); that stretch reads PDGEGSDAAEGDSESELDDETFNPSEDEEEEEEDSDEDYSDETEDSVDSEESADSEE. The segment covering 986-1006 has biased composition (basic and acidic residues); it reads ESGKDWDELEEEARKADRESL.

The protein belongs to the peptidase M24 family. SPT16 subfamily. As to quaternary structure, component of the FACT complex (also called the DUF complex), a stable heterodimer of ssrp1 and supt16h. May also be a component of a ck2-spt16-ssrp1 complex composed of ssrp1, supt16h, csnk2a1, csnk2a2 and csnk2b. The FACT complex may also interact with vcp.

The protein resides in the nucleus. The protein localises to the chromosome. Component of the FACT complex, a general chromatin factor that acts to reorganize nucleosomes. The FACT complex is involved in multiple processes that require DNA as a template such as mRNA elongation, DNA replication and DNA repair. During transcription elongation the FACT complex acts as a histone chaperone that both destabilizes and restores nucleosomal structure. It facilitates the passage of RNA polymerase II and transcription by promoting the dissociation of one histone H2A-H2B dimer from the nucleosome, then subsequently promotes the reestablishment of the nucleosome following the passage of RNA polymerase II. In Xenopus laevis (African clawed frog), this protein is FACT complex subunit SPT16 (supt16h).